A 132-amino-acid polypeptide reads, in one-letter code: Small ribosomal subunit protein uS8 (132 aa).

Belongs to the universal ribosomal protein uS8 family. As to quaternary structure, part of the 30S ribosomal subunit. Contacts proteins S5 and S12.

Functionally, one of the primary rRNA binding proteins, it binds directly to 16S rRNA central domain where it helps coordinate assembly of the platform of the 30S subunit. This chain is Small ribosomal subunit protein uS8, found in Kineococcus radiotolerans (strain ATCC BAA-149 / DSM 14245 / SRS30216).